The following is a 147-amino-acid chain: Nucleoside diphosphate kinase (147 aa).

6 residues coordinate ATP: lysine 9, phenylalanine 57, arginine 85, threonine 91, arginine 102, and asparagine 112. The active-site Pros-phosphohistidine intermediate is the histidine 115.

The protein belongs to the NDK family. In terms of assembly, homotetramer. Mg(2+) is required as a cofactor.

It is found in the cytoplasm. It catalyses the reaction a 2'-deoxyribonucleoside 5'-diphosphate + ATP = a 2'-deoxyribonucleoside 5'-triphosphate + ADP. The catalysed reaction is a ribonucleoside 5'-diphosphate + ATP = a ribonucleoside 5'-triphosphate + ADP. Functionally, major role in the synthesis of nucleoside triphosphates other than ATP. The ATP gamma phosphate is transferred to the NDP beta phosphate via a ping-pong mechanism, using a phosphorylated active-site intermediate. The sequence is that of Nucleoside diphosphate kinase from Listeria monocytogenes serotype 4b (strain F2365).